The sequence spans 100 residues: UPF0213 protein YhbQ (100 aa).

A GIY-YIG domain is found at 2-77 (TPWFLYLIRT…KQLTKRQKER (76 aa)).

It belongs to the UPF0213 family.

This Escherichia coli O1:K1 / APEC protein is UPF0213 protein YhbQ.